Consider the following 388-residue polypeptide: tRNA (guanine(26)-N(2))-dimethyltransferase (388 aa).

One can recognise a Trm1 methyltransferase domain in the interval 4-383 (KTIVEGTTKV…APITEIKEII (380 aa)). 4 residues coordinate S-adenosyl-L-methionine: Arg41, Arg78, Asp94, and Ala123. Positions 251, 254, 271, and 274 each coordinate Zn(2+).

Belongs to the class I-like SAM-binding methyltransferase superfamily. Trm1 family.

It carries out the reaction guanosine(26) in tRNA + 2 S-adenosyl-L-methionine = N(2)-dimethylguanosine(26) in tRNA + 2 S-adenosyl-L-homocysteine + 2 H(+). Its function is as follows. Dimethylates a single guanine residue at position 26 of a number of tRNAs using S-adenosyl-L-methionine as donor of the methyl groups. This chain is tRNA (guanine(26)-N(2))-dimethyltransferase, found in Methanosarcina barkeri (strain Fusaro / DSM 804).